A 262-amino-acid polypeptide reads, in one-letter code: Phosphate import ATP-binding protein PstB (262 aa).

The 242-residue stretch at 16-257 (MEARHLSVRY…PSEQRTEDYV (242 aa)) folds into the ABC transporter domain. ATP is bound at residue 48–55 (GPSGCGKS).

It belongs to the ABC transporter superfamily. Phosphate importer (TC 3.A.1.7) family. As to quaternary structure, the complex is composed of two ATP-binding proteins (PstB), two transmembrane proteins (PstC and PstA) and a solute-binding protein (PstS).

It is found in the cell inner membrane. It carries out the reaction phosphate(out) + ATP + H2O = ADP + 2 phosphate(in) + H(+). Functionally, part of the ABC transporter complex PstSACB involved in phosphate import. Responsible for energy coupling to the transport system. The polypeptide is Phosphate import ATP-binding protein PstB (Anaeromyxobacter dehalogenans (strain 2CP-C)).